The chain runs to 272 residues: Sugar-phosphatase AraL (272 aa).

It belongs to the HAD-like hydrolase superfamily. It depends on Mg(2+) as a cofactor.

It carries out the reaction sugar phosphate + H2O = sugar + phosphate.. It catalyses the reaction O-phospho-L-serine + H2O = L-serine + phosphate. The catalysed reaction is O-phospho-D-serine + H2O = D-serine + phosphate. Its function is as follows. Catalyzes the dephosphorylation of C5 and C6 carbon sugars in vitro. Catalyzes the dephosphorylation of 3'-AMP and phosphoserine in vitro. The chain is Sugar-phosphatase AraL (araL) from Bacillus subtilis (strain 168).